A 310-amino-acid chain; its full sequence is Aspartate carbamoyltransferase catalytic subunit (310 aa).

Carbamoyl phosphate contacts are provided by R55 and T56. K83 provides a ligand contact to L-aspartate. Carbamoyl phosphate contacts are provided by R105, H136, and Q139. The L-aspartate site is built by R169 and R223. Carbamoyl phosphate is bound by residues G264 and P265.

It belongs to the aspartate/ornithine carbamoyltransferase superfamily. ATCase family. Heterododecamer (2C3:3R2) of six catalytic PyrB chains organized as two trimers (C3), and six regulatory PyrI chains organized as three dimers (R2).

It catalyses the reaction carbamoyl phosphate + L-aspartate = N-carbamoyl-L-aspartate + phosphate + H(+). The protein operates within pyrimidine metabolism; UMP biosynthesis via de novo pathway; (S)-dihydroorotate from bicarbonate: step 2/3. Catalyzes the condensation of carbamoyl phosphate and aspartate to form carbamoyl aspartate and inorganic phosphate, the committed step in the de novo pyrimidine nucleotide biosynthesis pathway. This is Aspartate carbamoyltransferase catalytic subunit from Saccharopolyspora erythraea (strain ATCC 11635 / DSM 40517 / JCM 4748 / NBRC 13426 / NCIMB 8594 / NRRL 2338).